Here is a 515-residue protein sequence, read N- to C-terminus: Glycosyltransferase family 92 protein F59C6.8 (515 aa).

The helical transmembrane segment at Leu-18–Leu-38 threads the bilayer. Residues Arg-163–Tyr-456 enclose the GT92 domain.

It belongs to the glycosyltransferase 92 family.

The protein resides in the membrane. In Caenorhabditis elegans, this protein is Glycosyltransferase family 92 protein F59C6.8.